Here is an 852-residue protein sequence, read N- to C-terminus: MDNTKEKDNFKDDLLLRMGLNDNKAGMEGLDKEKINKIIMEATKGSRFYGNELKKEKQVNQRIENMMQQKAQITSQQLRKAQLQVDKFAMELERNRNLNNTIVHVDMDAFYAAVEMRDNPELKDKPIAVGSMSMLATSNYHARRFGVRAAMPGFIAKRLCPQLIIVPPNFDKYRAVSKEVKEILAEYDPNFMAMSLDEAYLNITQHLQERQDWPEDKRRYFIKMGNYLKIDTPRQEANELTEYERSISPLLFEDSPPDLQPQGSPFQLNSEEQNNPQIAQNSVVFGTSAEEVVKEIRFRIEQKTTLTASAGIAPNTMLAKVCSDKNKPNGQYQILPSRSAVMDFIKDLPIRKVSGIGKVTEKMLMALGIVTCTELYQQRALLSLLFSETSWHYFLHIALGLGSTDLARDGERKSMSVERTFSEISKTEEQYSLCQELCAELAHDLQKEGLKGRTVTIKLKNVNFEVKTRASTVPAAISTAEEIFAIAKELLRTEVNVGSPHPLRLRLMGVRMSTFSSEDDRKHQQRSIIGFLQAGNQALSSTGDSLDKTDKTELAKPLEMSHKKSFFDKKRSERISNCQDTSRCKTAGQQALQILEPSQALKKLSESFETSENSNDCQTFICPVCFREQEGVSLEAFNEHVDECLDGPSTSENSKISCYSHASSADIGQKEDVHPSIPLCEKRGHENGEITLVDGVDLTGTEDRSLKAARMDTLENNRSKEECPDIPDKSCPISLENETISTLSRQDSVQPCTDEVVTGRALVCPVCNLEQETSDLTLFNIHVDICLNKGIIQELRNSEGNSVKQPKESSRSTDRLQKASGRTKRPGTKTKSSTLKKTKPRDPRHTLDGFFK.

In terms of domain architecture, UmuC spans 102-357; the sequence is IVHVDMDAFY…LPIRKVSGIG (256 aa). 2 residues coordinate Mg(2+): aspartate 106 and aspartate 197. The disordered stretch occupies residues 252-273; sequence FEDSPPDLQPQGSPFQLNSEEQ. A compositionally biased stretch (polar residues) spans 261-273; it reads PQGSPFQLNSEEQ. 2 consecutive UBZ4-type zinc fingers follow at residues 619–649 and 761–791; these read TFICPVCFREQEGVSLEAFNEHVDECLDGPS and ALVCPVCNLEQETSDLTLFNIHVDICLNKGI. Zn(2+) is bound by residues cysteine 622, cysteine 625, histidine 640, cysteine 644, cysteine 764, cysteine 767, histidine 782, and cysteine 786. Residues 798-852 form a disordered region; it reads SEGNSVKQPKESSRSTDRLQKASGRTKRPGTKTKSSTLKKTKPRDPRHTLDGFFK. Residues 805–817 are compositionally biased toward basic and acidic residues; that stretch reads QPKESSRSTDRLQ. Basic residues predominate over residues 821–839; sequence GRTKRPGTKTKSSTLKKTK. Residues 840-852 are compositionally biased toward basic and acidic residues; that stretch reads PRDPRHTLDGFFK.

This sequence belongs to the DNA polymerase type-Y family. As to quaternary structure, interacts with PCNA. Interacts with REV1. The cofactor is Mg(2+). Mn(2+) is required as a cofactor. As to expression, detected at low levels in heart, brain, lung, liver, kidney and testis.

The protein localises to the nucleus. It carries out the reaction DNA(n) + a 2'-deoxyribonucleoside 5'-triphosphate = DNA(n+1) + diphosphate. Its function is as follows. DNA polymerase specifically involved in DNA repair. Plays an important role in translesion synthesis, where the normal high-fidelity DNA polymerases cannot proceed and DNA synthesis stalls. Depending on the context, it inserts the correct base, but causes frequent base transitions, transversions and frameshifts. Lacks 3'-5' proofreading exonuclease activity. Forms a Schiff base with 5'-deoxyribose phosphate at abasic sites, but does not have lyase activity. In Mus musculus (Mouse), this protein is DNA polymerase kappa (Polk).